The sequence spans 515 residues: 2-isopropylmalate synthase (515 aa).

Residues 5 to 267 (VIIFDTTLRD…DTRINTQEIH (263 aa)) form the Pyruvate carboxyltransferase domain. Mn(2+) is bound by residues D14, H202, H204, and N238. The interval 392-515 (VLDKLSAHST…VADIKSHKHH (124 aa)) is regulatory domain.

The protein belongs to the alpha-IPM synthase/homocitrate synthase family. LeuA type 1 subfamily. Homodimer. The cofactor is Mn(2+).

It is found in the cytoplasm. The catalysed reaction is 3-methyl-2-oxobutanoate + acetyl-CoA + H2O = (2S)-2-isopropylmalate + CoA + H(+). The protein operates within amino-acid biosynthesis; L-leucine biosynthesis; L-leucine from 3-methyl-2-oxobutanoate: step 1/4. Catalyzes the condensation of the acetyl group of acetyl-CoA with 3-methyl-2-oxobutanoate (2-ketoisovalerate) to form 3-carboxy-3-hydroxy-4-methylpentanoate (2-isopropylmalate). In Haemophilus influenzae (strain 86-028NP), this protein is 2-isopropylmalate synthase.